The sequence spans 200 residues: TATA-box-binding protein (200 aa).

2 consecutive repeat copies span residues 25-101 (LQNI…ARII) and 115-192 (IQNI…YPVL).

It belongs to the TBP family. Belongs to the TFIID complex together with the TBP-associated factors (TAFs). Binds DNA as monomer.

The protein localises to the nucleus. Its function is as follows. General transcription factor that functions at the core of the DNA-binding multiprotein factor TFIID. Binding of TFIID to the TATA box is the initial transcriptional step of the pre-initiation complex (PIC), playing a role in the activation of eukaryotic genes transcribed by RNA polymerase II. This chain is TATA-box-binding protein, found in Nicotiana tabacum (Common tobacco).